Here is a 535-residue protein sequence, read N- to C-terminus: Solute carrier family 22 member 7 (535 aa).

12 helical membrane-spanning segments follow: residues 21-41 (LVLM…PVFM), 144-164 (ITST…GYLS), 178-198 (VSSL…MFVV), 202-222 (LTGS…LEWL), 232-252 (VIST…GYLI), 257-277 (WLLL…WWVP), 344-364 (ISLC…GLTL), 375-395 (QTQL…YFLV), 402-422 (LTEA…LLVS), 429-449 (ITAL…TAYL), 464-484 (LGLT…AALL), and 489-509 (LLLP…TALL).

Belongs to the major facilitator (TC 2.A.1) superfamily. Organic cation transporter (TC 2.A.1.19) family. As to expression, expressed in liver and kidney. Expressed at low levels in adipose tissue. Expressed in fetal liver. In kidney, expressed at the brush border of the proximal tubule S3 segment (S3) in the outer stripe and medullary rays. In kidney, expression is higher in female than male.

The protein localises to the basolateral cell membrane. The protein resides in the apical cell membrane. It localises to the cell membrane. The enzyme catalyses orotate(out) + L-glutamate(in) = orotate(in) + L-glutamate(out). The catalysed reaction is 3',5'-cyclic GMP(in) = 3',5'-cyclic GMP(out). It catalyses the reaction GMP(in) = GMP(out). It carries out the reaction 2'-deoxyguanosine(in) = 2'-deoxyguanosine(out). The enzyme catalyses GDP(in) = GDP(out). The catalysed reaction is guanosine(in) = guanosine(out). It catalyses the reaction GTP(in) = GTP(out). It carries out the reaction 3',5'-cyclic AMP(in) = 3',5'-cyclic AMP(out). The enzyme catalyses creatinine(in) = creatinine(out). The catalysed reaction is prostaglandin E2(out) = prostaglandin E2(in). It catalyses the reaction 2-oxoglutarate(in) = 2-oxoglutarate(out). It carries out the reaction glutarate(in) = glutarate(out). The enzyme catalyses urate(out) = urate(in). The catalysed reaction is estrone 3-sulfate(out) = estrone 3-sulfate(in). Its function is as follows. Functions as a Na(+)-independent bidirectional multispecific transporter. Contributes to the renal and hepatic elimination of endogenous organic compounds from the systemic circulation into the urine and bile, respectively. Capable of transporting a wide range of purine and pyrimidine nucleobases, nucleosides, and nucleotides with cGMP, 2'deoxyguanosine and GMP being the preferred substrates. Functions as a pH- and chloride-independent cGMP bidirectional facilitative transporter that can regulate both intracellular and extracellular levels of cGMP and may be involved in cGMP signaling pathways. Mediates orotate/glutamate bidirectional exchange and most likely display a physiological role in hepatic release of glutamate into the blood. Involved in renal secretion and possible reabsorption of creatinine. Able to uptake prostaglandin E2 (PGE2) and may contribute to PGE2 renal excretion. Also transports alpha-ketoglutarate and urate. Apart from the orotate/glutamate exchange, the counterions for the uptake of other SLC22A7/OAT2 substrates remain to be identified. The polypeptide is Solute carrier family 22 member 7 (Rattus norvegicus (Rat)).